An 85-amino-acid chain; its full sequence is Small ribosomal subunit protein bS20 (85 aa).

Belongs to the bacterial ribosomal protein bS20 family.

Functionally, binds directly to 16S ribosomal RNA. In Borrelia hermsii (strain HS1 / DAH), this protein is Small ribosomal subunit protein bS20.